A 246-amino-acid polypeptide reads, in one-letter code: Serine protease 1 (246 aa).

The signal sequence occupies residues 1-17 (MKTFIFLALLGAAVAFP). Positions 18 to 23 (VDDDDK) are cleaved as a propeptide — activation peptide. A Peptidase S1 domain is found at 24–244 (IVGGYTCGAN…YVSWIKQTIA (221 aa)). 6 cysteine pairs are disulfide-bonded: cysteine 30–cysteine 160, cysteine 48–cysteine 64, cysteine 132–cysteine 233, cysteine 139–cysteine 206, cysteine 171–cysteine 185, and cysteine 196–cysteine 220. The active-site Charge relay system is the histidine 63. Glutamate 75, asparagine 77, valine 80, and glutamate 85 together coordinate Ca(2+). The active-site Charge relay system is the aspartate 107. Substrate contacts are provided by residues 194 to 195 (DS), 197 to 198 (QG), and serine 200. Catalysis depends on serine 200, which acts as the Charge relay system.

Belongs to the peptidase S1 family. As to quaternary structure, interacts with SERPINA1. Ca(2+) is required as a cofactor. Post-translationally, autocatalytic cleavage after Lys-23 leads to beta-trypsin by releasing a terminal hexapeptide. Subsequent cleavage after Lys-148 leads to alpha-trypsin. Further cleavage after Lys-193 yields pseudotrypsin. A cleavage may also occur after Arg-122. In terms of processing, not sulfated on tyrosine residue(s). In terms of tissue distribution, synthesized in the acinar cells of the pancreas.

It is found in the secreted. It localises to the extracellular space. The enzyme catalyses Preferential cleavage: Arg-|-Xaa, Lys-|-Xaa.. Is inhibited by scorpion cyclotide trypsin inhibitor TopI1. This is Serine protease 1 (PRSS1) from Bos taurus (Bovine).